A 447-amino-acid chain; its full sequence is tRNA modification GTPase MnmE (447 aa).

(6S)-5-formyl-5,6,7,8-tetrahydrofolate-binding residues include Arg-24, Glu-81, and Lys-120. The TrmE-type G domain occupies 216–371 (GLNVVIAGKP…LRKELSDIAG (156 aa)). Position 226 (Asn-226) interacts with K(+). GTP-binding positions include 226–231 (NAGKSS), 245–251 (TDIAGTT), and 270–273 (DTAG). Ser-230 is a Mg(2+) binding site. Residues Thr-245, Ile-247, and Thr-250 each coordinate K(+). A Mg(2+)-binding site is contributed by Thr-251. Residue Lys-447 coordinates (6S)-5-formyl-5,6,7,8-tetrahydrofolate.

The protein belongs to the TRAFAC class TrmE-Era-EngA-EngB-Septin-like GTPase superfamily. TrmE GTPase family. Homodimer. Heterotetramer of two MnmE and two MnmG subunits. K(+) serves as cofactor.

The protein localises to the cytoplasm. Its function is as follows. Exhibits a very high intrinsic GTPase hydrolysis rate. Involved in the addition of a carboxymethylaminomethyl (cmnm) group at the wobble position (U34) of certain tRNAs, forming tRNA-cmnm(5)s(2)U34. This Ruthia magnifica subsp. Calyptogena magnifica protein is tRNA modification GTPase MnmE.